The sequence spans 296 residues: Thioredoxin-related transmembrane protein 2 (296 aa).

Residues 1 to 48 (MAVLAPLIALVYSVPRLSRWLARPYYFLSALLSAAFLLVRKLPPVCES) form the signal peptide. Residues 49-102 (LPTQREDGNPCDFDWREVEILMFLSAIVMMKNRRSITVEQHVGNIFMFSKVANA) lie on the Extracellular side of the membrane. The helical transmembrane segment at 103–125 (ILFFRLDIRMGLLYITLCIVFLM) threads the bilayer. Topologically, residues 126-296 (TCKPPLYMGP…VPDEESKKDK (171 aa)) are cytoplasmic. One can recognise a Thioredoxin domain in the interval 132–269 (YMGPEYIKYF…LYQRAKKLSK (138 aa)). Ser211 and Ser243 each carry phosphoserine. Positions 272–296 (DKIPEEQPVAAVPAAVPDEESKKDK) are disordered. Over residues 277-287 (EQPVAAVPAAV) the composition is skewed to low complexity. The Di-lysine motif signature appears at 293–296 (KKDK).

As to quaternary structure, monomer. Homodimer; disulfide-linked. Occurs in both reduced and oxidized monomeric form. Oxidative conditions increase homodimerization. Interacts with CANX. Interacts with ATP2A2.

It localises to the endoplasmic reticulum membrane. It is found in the mitochondrion membrane. In terms of biological role, endoplasmic reticulum and mitochondria-associated protein that probably functions as a regulator of cellular redox state and thereby regulates protein post-translational modification, protein folding and mitochondrial activity. Indirectly regulates neuronal proliferation, migration, and organization in the developing brain. In Bos taurus (Bovine), this protein is Thioredoxin-related transmembrane protein 2 (TMX2).